The chain runs to 353 residues: MQVMNRYFLPKTGWEFFDVSRAYGVGVIVHTLSGDAVVSDMGGLYLIESQRELNFERIDQIHKFFGDDQAWDWTFITIGSGQREKTKKKVVEFLGNVEDIRNILDGLKELKSPVYIGSGKETLYQPMELAATKGIRDEILLKKQYSEGSPVKVSISDFTLSVLGHINATIRKFSNMGMIFAIPSPTRTRILHLIGEIRKRIDDSVKGLHRAGWFPSLAQIAVNLVLEELRVEEGGKFAPKFGSLIYGVMTKTGNQWKPLTGGIFPLDLLHQIAESNEAIKVLNKWKDIFEWTAFRKGYEDLPSALAEFITNPSLSNYERYIKLHLRNDIGKDRIKFGSYEEKVLKEVVNFVGV.

This is an uncharacterized protein from Archaeoglobus fulgidus (strain ATCC 49558 / DSM 4304 / JCM 9628 / NBRC 100126 / VC-16).